Reading from the N-terminus, the 735-residue chain is Phosphoribosylformylglycinamidine synthase subunit PurL (735 aa).

His-50 is an active-site residue. Positions 53 and 92 each coordinate ATP. Glu-94 provides a ligand contact to Mg(2+). Substrate is bound by residues 95-98 (SHNH) and Arg-117. His-96 functions as the Proton acceptor in the catalytic mechanism. Residue Asp-118 participates in Mg(2+) binding. Substrate is bound at residue Gln-241. Residue Asp-269 coordinates Mg(2+). Position 313–315 (313–315 (ESQ)) interacts with substrate. Residues Asp-495 and Gly-532 each contribute to the ATP site. Residue Asn-533 participates in Mg(2+) binding. Ser-535 contacts substrate.

Belongs to the FGAMS family. As to quaternary structure, monomer. Part of the FGAM synthase complex composed of 1 PurL, 1 PurQ and 2 PurS subunits.

It is found in the cytoplasm. The catalysed reaction is N(2)-formyl-N(1)-(5-phospho-beta-D-ribosyl)glycinamide + L-glutamine + ATP + H2O = 2-formamido-N(1)-(5-O-phospho-beta-D-ribosyl)acetamidine + L-glutamate + ADP + phosphate + H(+). It functions in the pathway purine metabolism; IMP biosynthesis via de novo pathway; 5-amino-1-(5-phospho-D-ribosyl)imidazole from N(2)-formyl-N(1)-(5-phospho-D-ribosyl)glycinamide: step 1/2. Its function is as follows. Part of the phosphoribosylformylglycinamidine synthase complex involved in the purines biosynthetic pathway. Catalyzes the ATP-dependent conversion of formylglycinamide ribonucleotide (FGAR) and glutamine to yield formylglycinamidine ribonucleotide (FGAM) and glutamate. The FGAM synthase complex is composed of three subunits. PurQ produces an ammonia molecule by converting glutamine to glutamate. PurL transfers the ammonia molecule to FGAR to form FGAM in an ATP-dependent manner. PurS interacts with PurQ and PurL and is thought to assist in the transfer of the ammonia molecule from PurQ to PurL. The polypeptide is Phosphoribosylformylglycinamidine synthase subunit PurL (Bartonella henselae (strain ATCC 49882 / DSM 28221 / CCUG 30454 / Houston 1) (Rochalimaea henselae)).